Reading from the N-terminus, the 346-residue chain is MAMVSEFLKQAWFIDNEEQEYIKTVKGSKGGPGSAVSPYPTFNPSSDVEASHKAITVKGVDEATIIEIHTKRTNAQRQQIKAAYLQEKGKPLDEALKKALTGHLEEVALALLKTPAQFDADELRAAMKGLGTDEDTLNEILASRTNREIREINRVYKEELKRDLAKDITSDTSGDYQKALLSLAKGDRSEDLAINDDLADTDARALYEAGERRKGTDLNVFITILTTRSYLHLRRVFQKYSKYSKHDMNKVLDLELKGDIENCLTVVVKCATSKPMFFAEKLHQAMKGNGTRHKTLIRIMVSRSEIDMNDIKACYQKLYGISLCQAILDETKGDYEKILVALCGGD.

Ala2 is modified (N-acetylalanine). Ser5 is modified (phosphoserine; by TRPM7). Residue Gln19 forms an Isoglutamyl lysine isopeptide (Gln-Lys) (interchain with K-?) linkage. Tyr21 carries the phosphotyrosine; by EGFR modification. Residues Val25 to Asp47 are disordered. 2 positions are modified to phosphoserine: Ser34 and Ser37. A Phosphothreonine modification is found at Thr41. 4 Annexin repeats span residues Phe42 to Lys113, Thr114 to Lys185, Asp197 to Lys269, and Ser273 to Gly344. Lys58 carries the N6-acetyllysine modification. Ca(2+)-binding residues include Gly59, Val60, Glu62, Lys97, Leu100, Glu105, Met127, Gly129, Gly131, Thr132, and Glu134. A Phosphothreonine modification is found at Thr136. Residues Asp171, Gly210, and Arg213 each contribute to the Ca(2+) site. Lys214 is covalently cross-linked (Glycyl lysine isopeptide (Lys-Gly) (interchain with G-Cter in SUMO1); alternate). Lys214 is covalently cross-linked (Glycyl lysine isopeptide (Lys-Gly) (interchain with G-Cter in SUMO2); alternate). Gly215 provides a ligand contact to Ca(2+). Lys239 carries the post-translational modification N6-acetyllysine. Ca(2+) contacts are provided by Asp253, Glu255, and Leu256. Residue Lys257 forms a Glycyl lysine isopeptide (Lys-Gly) (interchain with G-Cter in SUMO1) linkage. Glu261, Met286, Gly288, and Gly290 together coordinate Ca(2+). Lys312 carries the N6-acetyllysine modification. Cys324 and Cys343 form a disulfide bridge. Residues Leu328, Glu330, and Thr331 each coordinate Ca(2+). Residue Lys332 forms a Glycyl lysine isopeptide (Lys-Gly) (interchain with G-Cter in SUMO1) linkage. Glu336 lines the Ca(2+) pocket.

It belongs to the annexin family. In terms of assembly, homodimer; non-covalently linked. Homodimer; linked by transglutamylation. Homodimers linked by transglutamylation are observed in placenta, but not in other tissues. Interacts with S100A11. Heterotetramer, formed by two molecules each of S100A11 and ANXA1. Interacts with DYSF. Interacts with EGFR. Post-translationally, phosphorylated by EGFR. Phosphorylated by protein kinase C and TRPM7. Phosphorylated in response to EGF treatment. Sumoylated. In terms of processing, proteolytically cleaved by cathepsin CTSG to release the active N-terminal peptide Ac2-26. As to expression, detected in lung and spleen (at protein level).

The protein resides in the nucleus. It is found in the cytoplasm. The protein localises to the cell projection. Its subcellular location is the cilium. It localises to the basolateral cell membrane. The protein resides in the lateral cell membrane. It is found in the early endosome. The protein localises to the cell membrane. Its subcellular location is the cytoplasmic vesicle membrane. It localises to the apical cell membrane. The protein resides in the membrane. It is found in the endosome. The protein localises to the secreted. Its subcellular location is the extracellular space. It localises to the extracellular exosome. The protein resides in the cytoplasmic vesicle. It is found in the secretory vesicle lumen. The protein localises to the phagocytic cup. Its function is as follows. Plays important roles in the innate immune response as effector of glucocorticoid-mediated responses and regulator of the inflammatory process. Has anti-inflammatory activity. Plays a role in glucocorticoid-mediated down-regulation of the early phase of the inflammatory response. Contributes to the adaptive immune response by enhancing signaling cascades that are triggered by T-cell activation, regulates differentiation and proliferation of activated T-cells. Promotes the differentiation of T-cells into Th1 cells and negatively regulates differentiation into Th2 cells. Has no effect on unstimulated T-cells. Negatively regulates hormone exocytosis via activation of the formyl peptide receptors and reorganization of the actin cytoskeleton. Has high affinity for Ca(2+) and can bind up to eight Ca(2+) ions. Displays Ca(2+)-dependent binding to phospholipid membranes. Plays a role in the formation of phagocytic cups and phagosomes. Plays a role in phagocytosis by mediating the Ca(2+)-dependent interaction between phagosomes and the actin cytoskeleton. Functions at least in part by activating the formyl peptide receptors and downstream signaling cascades. Promotes chemotaxis of granulocytes and monocytes via activation of the formyl peptide receptors. Promotes rearrangement of the actin cytoskeleton, cell polarization and cell migration. Promotes resolution of inflammation and wound healing. Acts via neutrophil N-formyl peptide receptors to enhance the release of CXCL2. The protein is Annexin A1 (ANXA1) of Sus scrofa (Pig).